We begin with the raw amino-acid sequence, 212 residues long: Probable NADH dehydrogenase [ubiquinone] iron-sulfur protein 8, mitochondrial (212 aa).

4Fe-4S ferredoxin-type domains follow at residues 104–133 (RRYPSGEERCIACKLCEAICPAQAITIEAE) and 143–172 (TRYDIDMTKCIYCGLCQEACPVDAIVEGPN). C113, C116, C119, C123, C152, C155, C158, and C162 together coordinate [4Fe-4S] cluster.

This sequence belongs to the complex I 23 kDa subunit family. As to quaternary structure, complex I is composed of 45 different subunits This is a component of the iron-sulfur (IP) fragment of the enzyme. It depends on [4Fe-4S] cluster as a cofactor.

Its subcellular location is the mitochondrion. It catalyses the reaction a ubiquinone + NADH + 5 H(+)(in) = a ubiquinol + NAD(+) + 4 H(+)(out). Core subunit of the mitochondrial membrane respiratory chain NADH dehydrogenase (Complex I) that is believed to belong to the minimal assembly required for catalysis. Complex I functions in the transfer of electrons from NADH to the respiratory chain. The immediate electron acceptor for the enzyme is believed to be ubiquinone. This is Probable NADH dehydrogenase [ubiquinone] iron-sulfur protein 8, mitochondrial from Caenorhabditis elegans.